We begin with the raw amino-acid sequence, 395 residues long: Major outer membrane protein P.IA (395 aa).

The N-terminal stretch at Met1–Ala19 is a signal peptide.

This sequence belongs to the Gram-negative porin family. In terms of assembly, homotrimer.

The protein localises to the cell outer membrane. Functionally, serves as a slightly cation selective porin. Major antigen on the gonococcal cell surface and it may have pathogenic properties in addition to its porin activity. This chain is Major outer membrane protein P.IA (porA), found in Neisseria meningitidis serogroup A / serotype 4A (strain DSM 15465 / Z2491).